The following is a 264-amino-acid chain: NAD kinase (264 aa).

Asp45 (proton acceptor) is an active-site residue. Residues 45–46, 121–122, Arg147, Asp149, Ala184, and Gln221 each bind NAD(+); these read DG and NE.

The protein belongs to the NAD kinase family. It depends on a divalent metal cation as a cofactor.

It localises to the cytoplasm. It catalyses the reaction NAD(+) + ATP = ADP + NADP(+) + H(+). Its function is as follows. Involved in the regulation of the intracellular balance of NAD and NADP, and is a key enzyme in the biosynthesis of NADP. Catalyzes specifically the phosphorylation on 2'-hydroxyl of the adenosine moiety of NAD to yield NADP. This Leuconostoc mesenteroides subsp. mesenteroides (strain ATCC 8293 / DSM 20343 / BCRC 11652 / CCM 1803 / JCM 6124 / NCDO 523 / NBRC 100496 / NCIMB 8023 / NCTC 12954 / NRRL B-1118 / 37Y) protein is NAD kinase.